The primary structure comprises 447 residues: BAG family molecular chaperone regulator 5 (447 aa).

BAG domains lie at 9 to 86 (SISR…EQNA), 95 to 167 (QNIF…EDCM), 182 to 260 (SVAK…DLEE), 275 to 350 (SILK…DLKE), and 365 to 442 (SHKA…DLKS).

As to quaternary structure, binds to the ATPase domain of HSP/HSP70 chaperones. Binds PRKN. Interacts with HSPA8 and JPH2. As to expression, expressed in the heart.

Co-chaperone for HSP/HSP70 proteins. It functions as a nucleotide-exchange factor promoting the release of ADP from HSP70, thereby activating HSP70-mediated protein refolding. Has an essential role in maintaining proteostasis at junctional membrane complexes (JMC), where it may function as a scaffold between the HSPA8 chaperone and JMC proteins enabling correct, HSPA8-dependent JMC protein folding. Inhibits both auto-ubiquitination of PRKN and ubiquitination of target proteins by PRKN. The polypeptide is BAG family molecular chaperone regulator 5 (BAG5) (Homo sapiens (Human)).